A 244-amino-acid chain; its full sequence is Carboxy-S-adenosyl-L-methionine synthase (244 aa).

S-adenosyl-L-methionine-binding positions include Y41, 66–68, N134, and R201; that span reads GCS.

Belongs to the class I-like SAM-binding methyltransferase superfamily. Cx-SAM synthase family. In terms of assembly, homodimer.

It carries out the reaction prephenate + S-adenosyl-L-methionine = carboxy-S-adenosyl-L-methionine + 3-phenylpyruvate + H2O. Its function is as follows. Catalyzes the conversion of S-adenosyl-L-methionine (SAM) to carboxy-S-adenosyl-L-methionine (Cx-SAM). In Cellvibrio japonicus (strain Ueda107) (Pseudomonas fluorescens subsp. cellulosa), this protein is Carboxy-S-adenosyl-L-methionine synthase.